The chain runs to 158 residues: Antitoxin TacA (158 aa).

It belongs to the TacA antitoxin family. In terms of assembly, forms a complex with cognate toxin TacT.

Antitoxin component of a type II toxin-antitoxin (TA) system. Counteracts the toxic effect of cognate toxin TacT. Its function is as follows. TacA-TacT both represses and derepresses expression of its own operon. The sequence is that of Antitoxin TacA from Mycobacterium tuberculosis (strain ATCC 25618 / H37Rv).